Consider the following 348-residue polypeptide: Autophagy-related protein 27 (348 aa).

The first 20 residues, 1–20 (MYRPDLLAFLLPLLAAPVFS), serve as a signal peptide directing secretion. At 21-274 (AETLDCGKIR…DDGGDNSSSH (254 aa)) the chain is on the lumenal side. Residues 24–255 (LDCGKIRADG…TWHTKYACEK (232 aa)) form the MRH domain. Cystine bridges form between Cys26/Cys69, Cys82/Cys89, and Cys175/Cys253. Residues Asn61 and Asn84 are each glycosylated (N-linked (GlcNAc...) asparagine). Positions 180-208 (EGTEGEWVSEEKYEKRADEKKDDDKKEDG) are enriched in basic and acidic residues. The disordered stretch occupies residues 180–219 (EGTEGEWVSEEKYEKRADEKKDDDKKEDGGDKDEGESTLE). N-linked (GlcNAc...) asparagine glycosylation is found at Asn226 and Asn270. The helical transmembrane segment at 275-295 (WGFFTWFVLIAFLLIAGYLIF) threads the bilayer. The Cytoplasmic segment spans residues 296 to 348 (SSWINFTRYGARGWDLLPHSDTIRDIPYLLKDFIRRILNTVQGTGSRGGYSAV).

The protein belongs to the ATG27 family. In terms of assembly, forms a complex with ATG9 and ATG23.

Its subcellular location is the cytoplasmic vesicle membrane. The protein localises to the golgi apparatus membrane. The protein resides in the mitochondrion membrane. It is found in the preautophagosomal structure membrane. In terms of biological role, effector of VPS34 phosphatidylinositol 3-phosphate kinase signaling. Regulates the cytoplasm to vacuole transport (Cvt) vesicle formation. Plays a role in ATG protein retrieval from the pre-autophagosomal structure (PAS) and is especially required for autophagy-dependent cycling of ATG9. Autophagy is required for proper vegetative growth, asexual/sexual reproduction, and full virulence. Autophagy is particularly involved in the biosynthesis of deoxynivalenol (DON), an important virulence determinant. The protein is Autophagy-related protein 27 of Gibberella zeae (strain ATCC MYA-4620 / CBS 123657 / FGSC 9075 / NRRL 31084 / PH-1) (Wheat head blight fungus).